Consider the following 362-residue polypeptide: Protein ABHD12B (362 aa).

This sequence belongs to the serine esterase family.

The chain is Protein ABHD12B from Homo sapiens (Human).